Here is a 169-residue protein sequence, read N- to C-terminus: UPF0316 protein Dde_2502 (169 aa).

3 helical membrane passes run 1–21 (MITA…LCDV), 38–58 (LAFS…SRVI), and 68–88 (LAFA…EGVF).

It belongs to the UPF0316 family.

It is found in the cell membrane. The polypeptide is UPF0316 protein Dde_2502 (Oleidesulfovibrio alaskensis (strain ATCC BAA-1058 / DSM 17464 / G20) (Desulfovibrio alaskensis)).